A 291-amino-acid polypeptide reads, in one-letter code: Hydroxysteroid 11-beta-dehydrogenase 1-like protein A (291 aa).

An N-terminal signal peptide occupies residues methionine 1–tyrosine 18. Residues glycine 40 to arginine 66, aspartate 91 to methionine 92, and asparagine 118 to isoleucine 120 each bind NADP(+). Serine 170 is a binding site for substrate. Residue tyrosine 183 is the Proton acceptor of the active site. NADP(+) contacts are provided by residues tyrosine 183 to lysine 187 and glycine 216 to asparagine 222.

The protein belongs to the short-chain dehydrogenases/reductases (SDR) family.

Its subcellular location is the secreted. It catalyses the reaction cortisone + NADPH + H(+) = cortisol + NADP(+). Unidirectional NADP(+)-dependent cortisol dehydrogenase (in vitro). This chain is Hydroxysteroid 11-beta-dehydrogenase 1-like protein A (hsd11b1l-a), found in Xenopus laevis (African clawed frog).